Reading from the N-terminus, the 510-residue chain is NAD(P)H-quinone oxidoreductase subunit 2 B, chloroplastic (510 aa).

A run of 13 helical transmembrane segments spans residues 24–44, 57–77, 99–119, 124–144, 149–169, 183–203, 227–247, 295–315, 323–343, 354–374, 395–415, 418–438, and 482–502; these read LLLF…GLIL, IPWL…ALLF, IFQF…VEYI, MAIT…MFLC, LITI…LSGY, YLLM…WLYG, PGIS…LSLA, WHLL…LIAI, MLAY…IVGD, YMLF…LFGL, ALSL…AGFF, LHLF…IGLL, and LSMI…NPIV.

The protein belongs to the complex I subunit 2 family. NDH is composed of at least 16 different subunits, 5 of which are encoded in the nucleus.

Its subcellular location is the plastid. The protein localises to the chloroplast thylakoid membrane. The enzyme catalyses a plastoquinone + NADH + (n+1) H(+)(in) = a plastoquinol + NAD(+) + n H(+)(out). It carries out the reaction a plastoquinone + NADPH + (n+1) H(+)(in) = a plastoquinol + NADP(+) + n H(+)(out). Functionally, NDH shuttles electrons from NAD(P)H:plastoquinone, via FMN and iron-sulfur (Fe-S) centers, to quinones in the photosynthetic chain and possibly in a chloroplast respiratory chain. The immediate electron acceptor for the enzyme in this species is believed to be plastoquinone. Couples the redox reaction to proton translocation, and thus conserves the redox energy in a proton gradient. The chain is NAD(P)H-quinone oxidoreductase subunit 2 B, chloroplastic from Manihot esculenta (Cassava).